We begin with the raw amino-acid sequence, 154 residues long: 6,7-dimethyl-8-ribityllumazine synthase (154 aa).

5-amino-6-(D-ribitylamino)uracil contacts are provided by residues Phe-22, 56-58, and 80-82; these read AFE and AVI. 85–86 contributes to the (2S)-2-hydroxy-3-oxobutyl phosphate binding site; the sequence is AT. The active-site Proton donor is His-88. A 5-amino-6-(D-ribitylamino)uracil-binding site is contributed by Phe-113. Arg-127 contributes to the (2S)-2-hydroxy-3-oxobutyl phosphate binding site.

The protein belongs to the DMRL synthase family. Forms an icosahedral capsid composed of 60 subunits, arranged as a dodecamer of pentamers.

The catalysed reaction is (2S)-2-hydroxy-3-oxobutyl phosphate + 5-amino-6-(D-ribitylamino)uracil = 6,7-dimethyl-8-(1-D-ribityl)lumazine + phosphate + 2 H2O + H(+). It participates in cofactor biosynthesis; riboflavin biosynthesis; riboflavin from 2-hydroxy-3-oxobutyl phosphate and 5-amino-6-(D-ribitylamino)uracil: step 1/2. Its function is as follows. Catalyzes the formation of 6,7-dimethyl-8-ribityllumazine by condensation of 5-amino-6-(D-ribitylamino)uracil with 3,4-dihydroxy-2-butanone 4-phosphate. This is the penultimate step in the biosynthesis of riboflavin. The chain is 6,7-dimethyl-8-ribityllumazine synthase from Anoxybacillus flavithermus (strain DSM 21510 / WK1).